A 1023-amino-acid polypeptide reads, in one-letter code: Hemolysin, chromosomal (1023 aa).

The next 3 helical transmembrane spans lie at 237–259, 267–326, and 364–410; these read IGAG…ILSN, KAAA…LSIA, and DASL…GILE. Residues K563 and K689 are each lipidated (N6-myristoyl lysine). Hemolysin-type calcium-binding repeat units follow at residues 731–748, 749–766, 767–784, 785–802, 815–832, and 833–850; these read FGSK…DDHI, EGND…NDTL, SGGN…NDKL, IGGA…DDEL, SGGK…ADLL, and DGGE…NDIY. A compositionally biased stretch (basic and acidic residues) spans 747–763; that stretch reads HIEGNDGNDRLYGDKGN. Residues 747–780 form a disordered region; the sequence is HIEGNDGNDRLYGDKGNDTLSGGNGDDQLYGGDG.

This sequence belongs to the RTX prokaryotic toxin (TC 1.C.11) family. In terms of processing, myristoylated by HlyC; the toxin only becomes active when modified. Mainly myristoylated, while a minor fraction is acylated with pentadecanoyl (C15:0; 26%) and heptadecanoyl (C17:0; 6%) fatty acyl groups. Fatty acylation is involved in binding to host membranes and promotes the irreversible insertion of Hemolysin into the host cell membrane. Can be activated by both myristoylation and palmitoylation, but HlyC catalyzes lysine myristoylation.

Its subcellular location is the secreted. The protein localises to the host cell membrane. Bacterial hemolysins are exotoxins that attack blood cell membranes and cause cell rupture by forming a pore. The polypeptide is Hemolysin, chromosomal (Escherichia coli).